A 302-amino-acid polypeptide reads, in one-letter code: MLEELNAKDKYSFNKLQKRLRRNVGQAIADFNMIEEGDKIMVCLSGGKDSFAMLDILMSLKASAPIHFDLVAVNLDQKQPGFPEHVLPEYLATLGVDFKIVEEDTYSIVKDKVPEGKTTCALCSRLRRGILYRTAQELGCTKIALGHHRDDILETLFLNMFYGGKLKSMPPKLVSDDGKNVVIRPLAYCKEKDLVRYAEVKAFPIIPCNLCGSQENLQRQAIKQMMQDWDRRFPGRIETMFTAIQDVIPSHLLDHKLFDFKSINRDSGIIDGGDKAFDPPELPTAPLLNIDEMDVLDVIEVR.

Residues 45-50 carry the PP-loop motif motif; that stretch reads SGGKDS. [4Fe-4S] cluster contacts are provided by C120, C123, and C211.

This sequence belongs to the TtcA family. As to quaternary structure, homodimer. The cofactor is Mg(2+). [4Fe-4S] cluster is required as a cofactor.

The protein resides in the cytoplasm. It carries out the reaction cytidine(32) in tRNA + S-sulfanyl-L-cysteinyl-[cysteine desulfurase] + AH2 + ATP = 2-thiocytidine(32) in tRNA + L-cysteinyl-[cysteine desulfurase] + A + AMP + diphosphate + H(+). It functions in the pathway tRNA modification. Its function is as follows. Catalyzes the ATP-dependent 2-thiolation of cytidine in position 32 of tRNA, to form 2-thiocytidine (s(2)C32). The sulfur atoms are provided by the cysteine/cysteine desulfurase (IscS) system. In Aeromonas salmonicida (strain A449), this protein is tRNA-cytidine(32) 2-sulfurtransferase.